The chain runs to 51 residues: Small integral membrane protein 38 (51 aa).

The chain crosses the membrane as a helical span at residues 13–33 (PLLALLVVILLARLILWSCLG).

Its subcellular location is the membrane. The sequence is that of Small integral membrane protein 38 from Homo sapiens (Human).